We begin with the raw amino-acid sequence, 341 residues long: L-threonine 3-dehydrogenase (341 aa).

Cysteine 38 contributes to the Zn(2+) binding site. Catalysis depends on charge relay system residues threonine 40 and histidine 43. Zn(2+) contacts are provided by histidine 63, glutamate 64, cysteine 93, cysteine 96, cysteine 99, and cysteine 107. Residues isoleucine 175, aspartate 195, arginine 200, 262–264 (LGI), and 286–287 (IY) contribute to the NAD(+) site.

It belongs to the zinc-containing alcohol dehydrogenase family. As to quaternary structure, homotetramer. Zn(2+) is required as a cofactor.

The protein resides in the cytoplasm. It catalyses the reaction L-threonine + NAD(+) = (2S)-2-amino-3-oxobutanoate + NADH + H(+). It participates in amino-acid degradation; L-threonine degradation via oxydo-reductase pathway; glycine from L-threonine: step 1/2. Functionally, catalyzes the NAD(+)-dependent oxidation of L-threonine to 2-amino-3-ketobutyrate. The protein is L-threonine 3-dehydrogenase of Shewanella putrefaciens (strain CN-32 / ATCC BAA-453).